We begin with the raw amino-acid sequence, 212 residues long: Thymidylate kinase (212 aa).

Residue 11-18 (GPEGAGKT) participates in ATP binding.

The protein belongs to the thymidylate kinase family.

The catalysed reaction is dTMP + ATP = dTDP + ADP. In terms of biological role, phosphorylation of dTMP to form dTDP in both de novo and salvage pathways of dTTP synthesis. The polypeptide is Thymidylate kinase (Streptococcus pneumoniae (strain Taiwan19F-14)).